A 161-amino-acid polypeptide reads, in one-letter code: GTP-dependent dephospho-CoA kinase (161 aa).

The GTP site is built by Asp40, Val41, Val42, Asp59, and Glu112.

This sequence belongs to the GTP-dependent DPCK family.

It carries out the reaction 3'-dephospho-CoA + GTP = GDP + CoA + H(+). The protein operates within cofactor biosynthesis; coenzyme A biosynthesis. Its function is as follows. Catalyzes the GTP-dependent phosphorylation of the 3'-hydroxyl group of dephosphocoenzyme A to form coenzyme A (CoA). The polypeptide is GTP-dependent dephospho-CoA kinase (Methanoculleus marisnigri (strain ATCC 35101 / DSM 1498 / JR1)).